Consider the following 355-residue polypeptide: Isopentenyl-diphosphate delta-isomerase (355 aa).

Position 9-10 (9-10 (RK)) interacts with substrate. Residues 67–69 (AIT), Ser-97, and Asn-125 contribute to the FMN site. 97–99 (SQR) serves as a coordination point for substrate. Gln-161 serves as a coordination point for substrate. Glu-162 contacts Mg(2+). Residues Lys-197, Thr-227, 276–278 (GIR), and 297–298 (AL) each bind FMN.

Belongs to the IPP isomerase type 2 family. As to quaternary structure, homooctamer. Dimer of tetramers. Requires FMN as cofactor. NADPH is required as a cofactor. Mg(2+) serves as cofactor.

The protein localises to the cytoplasm. The enzyme catalyses isopentenyl diphosphate = dimethylallyl diphosphate. Its function is as follows. Involved in the biosynthesis of isoprenoids. Catalyzes the 1,3-allylic rearrangement of the homoallylic substrate isopentenyl (IPP) to its allylic isomer, dimethylallyl diphosphate (DMAPP). In Methanococcus maripaludis (strain DSM 14266 / JCM 13030 / NBRC 101832 / S2 / LL), this protein is Isopentenyl-diphosphate delta-isomerase.